A 338-amino-acid polypeptide reads, in one-letter code: MKVFYDKDADLSLIKGKKVTIIGYGSQGHAHALNLKDSGCNVTVGLRKGGASWSKAENAGLTVKEVGEAVKDADVVMMLLPDEQIADVYNKEVHGNIKQGAALAFAHGFNVHYGQVQPRADLDVIMIAPKAPGHTVRGTYSQGGGVPHLIAVYQDKSGSARDVALSYATANGGGRAGIIETNFREETETDLFGEQAVLCGGAVDLIKTGFEVLVEAGYAPEMAYFECLHELKLIVDLIYEGGIANMNYSISNNAEYGEYVTGPRVVTEDTKNAMRQCLKDIQTGEYAKSFILENKAGAPTLISRRRLNAEHEIEIVGAKLRAMMPWIAKNKLVDQTKN.

In terms of domain architecture, KARI N-terminal Rossmann spans 1–181 (MKVFYDKDAD…GGGRAGIIET (181 aa)). Residues 24–27 (YGSQ), R47, and S52 contribute to the NADP(+) site. H107 is an active-site residue. G133 is an NADP(+) binding site. The 146-residue stretch at 182–327 (NFREETETDL…AKLRAMMPWI (146 aa)) folds into the KARI C-terminal knotted domain. The Mg(2+) site is built by D190, E194, E226, and E230. S251 lines the substrate pocket.

It belongs to the ketol-acid reductoisomerase family. Mg(2+) is required as a cofactor.

The enzyme catalyses (2R)-2,3-dihydroxy-3-methylbutanoate + NADP(+) = (2S)-2-acetolactate + NADPH + H(+). It catalyses the reaction (2R,3R)-2,3-dihydroxy-3-methylpentanoate + NADP(+) = (S)-2-ethyl-2-hydroxy-3-oxobutanoate + NADPH + H(+). It participates in amino-acid biosynthesis; L-isoleucine biosynthesis; L-isoleucine from 2-oxobutanoate: step 2/4. It functions in the pathway amino-acid biosynthesis; L-valine biosynthesis; L-valine from pyruvate: step 2/4. Functionally, involved in the biosynthesis of branched-chain amino acids (BCAA). Catalyzes an alkyl-migration followed by a ketol-acid reduction of (S)-2-acetolactate (S2AL) to yield (R)-2,3-dihydroxy-isovalerate. In the isomerase reaction, S2AL is rearranged via a Mg-dependent methyl migration to produce 3-hydroxy-3-methyl-2-ketobutyrate (HMKB). In the reductase reaction, this 2-ketoacid undergoes a metal-dependent reduction by NADPH to yield (R)-2,3-dihydroxy-isovalerate. This is Ketol-acid reductoisomerase (NADP(+)) from Polynucleobacter asymbioticus (strain DSM 18221 / CIP 109841 / QLW-P1DMWA-1) (Polynucleobacter necessarius subsp. asymbioticus).